The chain runs to 218 residues: Putative glutamine transport system permease protein GlnP (218 aa).

In terms of domain architecture, ABC transmembrane type-1 spans 19-208; it reads TLVTLKYSVI…ILVMLISFIA (190 aa). Transmembrane regions (helical) follow at residues 25-45, 57-79, 86-108, and 187-207; these read YSVI…ICKV, FYTS…FASP, FSVF…SEVI, and FFPM…ISFI.

Belongs to the binding-protein-dependent transport system permease family. HisMQ subfamily.

It localises to the cell inner membrane. In terms of biological role, part of the binding-protein-dependent transport system for glutamine; probably responsible for the translocation of the substrate across the membrane. The chain is Putative glutamine transport system permease protein GlnP (glnP) from Rickettsia conorii (strain ATCC VR-613 / Malish 7).